Reading from the N-terminus, the 75-residue chain is Protein RALF-like 9 (75 aa).

An N-terminal signal peptide occupies residues 1-28 (MGMSKSIKVILSLALVVFLALAATKVEA). 2 disulfide bridges follow: C46/C54 and C66/C72.

This sequence belongs to the plant rapid alkalinization factor (RALF) family.

It localises to the secreted. Its function is as follows. Cell signaling peptide that may regulate plant stress, growth, and development. Mediates a rapid alkalinization of extracellular space by mediating a transient increase in the cytoplasmic Ca(2+) concentration leading to a calcium-dependent signaling events through a cell surface receptor and a concomitant activation of some intracellular mitogen-activated protein kinases. This Arabidopsis thaliana (Mouse-ear cress) protein is Protein RALF-like 9 (RALFL9).